Reading from the N-terminus, the 203-residue chain is MMQDVSSSPVSPADDSLSNSEEEPDRQQPPSGKRGGRKRRSSSRRSAGGGAGPGGAASGGVGGGDEPGSPAQGKRGKKSAGCGGGGGGGAGGGSSSGGGSPQSYEELQTQRVMANVRERQRTQSLNEAFAALRKIIPTLPSDKLSKIQTLKLAARYIDFLYQVLQSDELDSKMASCSYVAHERLSYAFSVWRMEGAWSMSASH.

Residues 1–18 (MMQDVSSSPVSPADDSLS) show a composition bias toward low complexity. The segment at 1 to 106 (MMQDVSSSPV…GGGSPQSYEE (106 aa)) is disordered. Residues 34–43 (RGGRKRRSSS) show a composition bias toward basic residues. Gly residues-rich tracts occupy residues 47-66 (AGGGAGPGGAASGGVGGGDE) and 81-100 (GCGGGGGGGAGGGSSSGGGS). One can recognise a bHLH domain in the interval 109 to 160 (TQRVMANVRERQRTQSLNEAFAALRKIIPTLPSDKLSKIQTLKLAARYIDFL). The tract at residues 162 to 192 (QVLQSDELDSKMASCSYVAHERLSYAFSVWR) is sufficient for transactivation activity.

As to quaternary structure, efficient DNA binding requires dimerization with another bHLH protein. Homodimer or heterodimer with E proteins such as TCF3. ID1 binds preferentially to TCF3 but does not interact efficiently with TWIST1 so ID1 levels control the amount of TCF3 available to dimerize with TWIST and thus determine the type of dimer formed.

It is found in the nucleus. In terms of biological role, acts as a transcriptional regulator. Inhibits myogenesis by sequestrating E proteins, inhibiting trans-activation by MEF2, and inhibiting DNA-binding by MYOD1 through physical interaction. This interaction probably involves the basic domains of both proteins. Also represses expression of pro-inflammatory cytokines such as TNFA and IL1B. Regulates cranial suture patterning and fusion. Activates transcription as a heterodimer with E proteins. Regulates gene expression differentially, depending on dimer composition. Homodimers induce expression of FGFR2 and POSTN while heterodimers repress FGFR2 and POSTN expression and induce THBS1 expression. Heterodimerization is also required for osteoblast differentiation. Represses the activity of the circadian transcriptional activator: NPAS2-BMAL1 heterodimer. This is Twist-related protein 1 (TWIST1) from Pongo pygmaeus (Bornean orangutan).